The sequence spans 315 residues: Aspartate carbamoyltransferase catalytic subunit (315 aa).

Positions 65 and 66 each coordinate carbamoyl phosphate. K93 contacts L-aspartate. R115, H143, and Q146 together coordinate carbamoyl phosphate. The L-aspartate site is built by R176 and R231. 2 residues coordinate carbamoyl phosphate: G272 and P273.

This sequence belongs to the aspartate/ornithine carbamoyltransferase superfamily. ATCase family. In terms of assembly, heterododecamer (2C3:3R2) of six catalytic PyrB chains organized as two trimers (C3), and six regulatory PyrI chains organized as three dimers (R2).

The catalysed reaction is carbamoyl phosphate + L-aspartate = N-carbamoyl-L-aspartate + phosphate + H(+). The protein operates within pyrimidine metabolism; UMP biosynthesis via de novo pathway; (S)-dihydroorotate from bicarbonate: step 2/3. Its function is as follows. Catalyzes the condensation of carbamoyl phosphate and aspartate to form carbamoyl aspartate and inorganic phosphate, the committed step in the de novo pyrimidine nucleotide biosynthesis pathway. The chain is Aspartate carbamoyltransferase catalytic subunit from Hyphomonas neptunium (strain ATCC 15444).